The primary structure comprises 371 residues: MSRISLSNFLSLPRYKFLLFSVVLIIVMTTLVFNGHDYKQTLNDRLTSLKNNFVEENDNAVLKEEPGKYTYMSLFTMPSTEEDYYFNATRVLIHRLKYHPTTKSKYPIHILALRGVDEWKIERFRKDGASVIVIDPIASSDIVYDTSSFSQEISARYEQMFSKLRIFEQIQFDKICVIDSDILIMKNIDDIFDTPYMYQQINTLNYTRLPSYTKPDDDTVYHFNEDFKEYGASRSEFYPYLLAAVSDRGEHHSIPPEDTPYFNAGLMLIRPSELHFNRILKIGRFPYMYENAKMMEQSLLNLAFSLDGWFPWTRLDPYYNGVWPSIDERPLLKTAHGKFWNIGSSEFAPVYLADWYAAYGEMLSFHKYETH.

A helical membrane pass occupies residues 17–33; that stretch reads FLLFSVVLIIVMTTLVF.

The protein to S.pombe SpBC4C3.08 and SpBC4C3.09.

It is found in the membrane. This is an uncharacterized protein from Schizosaccharomyces pombe (strain 972 / ATCC 24843) (Fission yeast).